A 509-amino-acid chain; its full sequence is Fumarate hydratase, mitochondrial (509 aa).

The transit peptide at 1–43 (MYRSARSLHRFSASLSDLRAAQRSIKARNVCPAPGLRHQTVRM) directs the protein to the mitochondrion. Residues 144 to 146 (SGT), 175 to 178 (HPND), 185 to 187 (SSN), and Thr233 each bind substrate. His234 (proton donor/acceptor) is an active-site residue. Ser364 is a catalytic residue. Substrate contacts are provided by residues Ser365 and 370–372 (KVN).

It belongs to the class-II fumarase/aspartase family. Fumarase subfamily. As to quaternary structure, homotetramer.

The protein localises to the mitochondrion. The protein resides in the cytoplasm. It is found in the cytosol. Its subcellular location is the nucleus. It localises to the chromosome. It catalyses the reaction (S)-malate = fumarate + H2O. It functions in the pathway carbohydrate metabolism; tricarboxylic acid cycle; (S)-malate from fumarate: step 1/1. Its function is as follows. Catalyzes the reversible stereospecific interconversion of fumarate to L-malate. Experiments in other species have demonstrated that specific isoforms of this protein act in defined pathways and favor one direction over the other. Functionally, catalyzes the hydration of fumarate to L-malate in the tricarboxylic acid (TCA) cycle to facilitate a transition step in the production of energy in the form of NADH. In terms of biological role, catalyzes the dehydration of L-malate to fumarate. Fumarate metabolism in the cytosol plays a role during urea cycle and arginine metabolism; fumarate being a by-product of the urea cycle and amino-acid catabolism. Also plays a role in DNA repair by promoting non-homologous end-joining (NHEJ). In response to DNA damage translocates to the nucleus and accumulates at DNA double-strand breaks (DSBs): acts by catalyzing formation of fumarate. The chain is Fumarate hydratase, mitochondrial from Danio rerio (Zebrafish).